A 598-amino-acid chain; its full sequence is Peroxisomal targeting signal receptor (598 aa).

3 disordered regions span residues 1–54 (MSFM…GEMS), 135–154 (RGGS…MQGG), and 208–237 (AVGK…TTTE). Polar residues predominate over residues 9–22 (ECSTGRNPLSQFTK). Residue Cys10 forms a Glycyl cysteine thioester (Cys-Gly) (interchain with G-Cter in ubiquitin) linkage. Lys22 participates in a covalent cross-link: Glycyl lysine isopeptide (Lys-Gly) (interchain with G-Cter in ubiquitin). Over residues 23 to 35 (HTAEDRSLQHDRV) the composition is skewed to basic and acidic residues. A compositionally biased stretch (low complexity) spans 220–233 (AETATATETVTETE). TPR repeat units lie at residues 304 to 337 (PDPF…NTEH), 338 to 371 (AEAW…EPGN), 372 to 409 (LSAL…VVDQ), 410 to 447 (ARNQ…ANID), 448 to 481 (ADVQ…RPDD), 482 to 515 (ALLW…RPSF), and 516 to 549 (VRAR…HKVE).

Belongs to the peroxisomal targeting signal receptor family. Post-translationally, ubiquitination at Cys-10 is UBC4-independent but requires the presence of PEX4. Ubiquitination at Lys-22 is UBC4-dependent.

It localises to the cytoplasm. Its subcellular location is the peroxisome membrane. Functionally, binds to the C-terminal PTS1-type tripeptide peroxisomal targeting signal (SKL-type) and plays an essential role in peroxisomal protein import. The chain is Peroxisomal targeting signal receptor (PAY32) from Yarrowia lipolytica (strain CLIB 122 / E 150) (Yeast).